The primary structure comprises 149 residues: D-aminoacyl-tRNA deacylase (149 aa).

The Gly-cisPro motif, important for rejection of L-amino acids signature appears at 137-138 (GP).

This sequence belongs to the DTD family. In terms of assembly, homodimer.

Its subcellular location is the cytoplasm. The enzyme catalyses glycyl-tRNA(Ala) + H2O = tRNA(Ala) + glycine + H(+). It catalyses the reaction a D-aminoacyl-tRNA + H2O = a tRNA + a D-alpha-amino acid + H(+). Its function is as follows. An aminoacyl-tRNA editing enzyme that deacylates mischarged D-aminoacyl-tRNAs. Also deacylates mischarged glycyl-tRNA(Ala), protecting cells against glycine mischarging by AlaRS. Acts via tRNA-based rather than protein-based catalysis; rejects L-amino acids rather than detecting D-amino acids in the active site. By recycling D-aminoacyl-tRNA to D-amino acids and free tRNA molecules, this enzyme counteracts the toxicity associated with the formation of D-aminoacyl-tRNA entities in vivo and helps enforce protein L-homochirality. The protein is D-aminoacyl-tRNA deacylase of Caldicellulosiruptor saccharolyticus (strain ATCC 43494 / DSM 8903 / Tp8T 6331).